A 579-amino-acid chain; its full sequence is L-ascorbate oxidase (579 aa).

The N-terminal stretch at 1 to 30 is a signal peptide; the sequence is MLQMGKAREPNFLILFFFGLILAFGISSEG. Plastocyanin-like domains lie at 33 to 152 and 164 to 330; these read IRHY…LIVD and DGEI…NYLP. Cystine bridges form between cysteine 49-cysteine 231, cysteine 111-cysteine 568, and cysteine 210-cysteine 223. 2 residues coordinate Cu cation: histidine 90 and histidine 92. An N-linked (GlcNAc...) asparagine glycan is attached at asparagine 122. Cu cation contacts are provided by histidine 134 and histidine 136. Asparagine 355 and asparagine 470 each carry an N-linked (GlcNAc...) asparagine glycan. In terms of domain architecture, Plastocyanin-like 3 spans 374–553; the sequence is NRRIFLLNTQ…HMGMGVVFAE (180 aa). Residues histidine 475, histidine 478, histidine 480, histidine 536, cysteine 537, histidine 538, histidine 542, and methionine 547 each coordinate Cu cation.

This sequence belongs to the multicopper oxidase family. Dimer. Requires Cu cation as cofactor.

The protein localises to the secreted. The enzyme catalyses 4 L-ascorbate + O2 = 4 monodehydro-L-ascorbate radical + 2 H2O. In terms of biological role, may be involved in a redox system involving ascorbic acid. The chain is L-ascorbate oxidase (AAO) from Cucurbita maxima (Pumpkin).